The chain runs to 294 residues: Elongation factor Ts (294 aa).

The interval 82 to 85 (TDFV) is involved in Mg(2+) ion dislocation from EF-Tu.

Belongs to the EF-Ts family.

It is found in the cytoplasm. Its function is as follows. Associates with the EF-Tu.GDP complex and induces the exchange of GDP to GTP. It remains bound to the aminoacyl-tRNA.EF-Tu.GTP complex up to the GTP hydrolysis stage on the ribosome. This is Elongation factor Ts from Psychrobacter arcticus (strain DSM 17307 / VKM B-2377 / 273-4).